A 496-amino-acid chain; its full sequence is Putative ammonium transporter 1 member 5 (496 aa).

11 consecutive transmembrane segments (helical) span residues 50 to 70, 85 to 105, 131 to 151, 156 to 176, 202 to 222, 246 to 266, 284 to 306, 314 to 334, 336 to 356, 369 to 389, and 422 to 442; these read LLFS…LCAG, VLDA…FAFG, FFLY…GSIA, FVAY…VVSH, FAGS…GALI, LVVL…PGSF, GIGR…TLFG, WNVT…TAGC, VVDP…LIGC, LEAA…VGLF, and LVQI…LFFI. A Phosphoserine modification is found at Ser-485.

Belongs to the ammonia transporter channel (TC 1.A.11.2) family.

The protein resides in the membrane. Functionally, involved in ammonium transport. In Arabidopsis thaliana (Mouse-ear cress), this protein is Putative ammonium transporter 1 member 5 (AMT1-5).